A 2053-amino-acid chain; its full sequence is Cell adhesion molecule DSCAML1 (2053 aa).

The signal sequence occupies residues 1–18; that stretch reads MWLVTFLLLLDSLHKARP. 9 Ig-like C2-type domains span residues 19–119, 115–217, 226–310, 314–396, 408–501, 506–586, 596–685, 690–784, and 788–885; these read EDVG…NIRI, PNIR…ARLS, PTIL…GILT, PLHV…QTAQ, PRIV…ARIN, PSIR…LSIS, PPLI…RQLI, PRFV…MFLT, and PAMI…LTVQ. The Extracellular portion of the chain corresponds to 19–1591; the sequence is EDVGTSLYFV…AQGEGDDVKK (1573 aa). Cystine bridges form between cysteine 47-cysteine 103, cysteine 146-cysteine 198, cysteine 247-cysteine 294, cysteine 336-cysteine 386, cysteine 429-cysteine 485, cysteine 526-cysteine 575, and cysteine 617-cysteine 669. N-linked (GlcNAc...) asparagine glycosylation occurs at asparagine 79. 2 N-linked (GlcNAc...) asparagine glycosylation sites follow: asparagine 368 and asparagine 471. 2 N-linked (GlcNAc...) asparagine glycosylation sites follow: asparagine 666 and asparagine 710. An intrachain disulfide couples cysteine 711 to cysteine 767. Residue asparagine 809 is glycosylated (N-linked (GlcNAc...) asparagine). Cysteine 810 and cysteine 867 form a disulfide bridge. Fibronectin type-III domains lie at 887–984, 989–1088, 1093–1189, and 1193–1288; these read PPDP…TEEA, PPMD…TLED, PPEN…TKED, and PPAG…AGKA. Asparagine 1144 and asparagine 1162 each carry an N-linked (GlcNAc...) asparagine glycan. The region spanning 1278-1377 is the Ig-like C2-type 10 domain; it reads EKVTIEPAGK…TGGFDTIIVN (100 aa). Cysteines 1311 and 1363 form a disulfide. N-linked (GlcNAc...) asparagine glycosylation is present at asparagine 1345. Fibronectin type-III domains are found at residues 1383 to 1477 and 1478 to 1578; these read PPDQ…THGR and EPSF…TIPP. Asparagine 1561 is a glycosylation site (N-linked (GlcNAc...) asparagine). Residues 1592 to 1612 form a helical membrane-spanning segment; sequence LFTIGCPVILATLGVALLFVV. Topologically, residues 1613-2053 are cytoplasmic; it reads RKKRKEKRLK…GAYSKSYTLV (441 aa). Disordered regions lie at residues 1716 to 1741, 1773 to 1803, 1840 to 1862, and 1974 to 2053; these read LIDM…HSTR, HGVT…STES, SSDQ…STPS, and LAMP…YTLV. The segment covering 1732-1741 has biased composition (basic residues); it reads KNVKSAHSTR. Over residues 1773 to 1789 the composition is skewed to polar residues; the sequence is HGVTVTESDSYSASLSQ. Over residues 1977-1993 the composition is skewed to pro residues; it reads PAPPAGTAPPAPGPTPS.

As to quaternary structure, homodimer; mediates homophilic interactions to promote cell adhesion. In terms of tissue distribution, in the retina, expressed in the rod photoreceptors, AII amacrine cells and rod bipolar cells (at protein level).

Its subcellular location is the cell membrane. The protein localises to the synapse. Cell adhesion molecule that plays a role in neuronal self-avoidance. Promotes repulsion between specific neuronal processes of either the same cell or the same subtype of cells. Promotes both isoneuronal self-avoidance for creating an orderly neurite arborization in retinal rod bipolar cells and heteroneuronal self-avoidance to maintain mosaic spacing between AII amacrine cells. Adhesion molecule that promotes lamina-specific synaptic connections in the retina: expressed in specific subsets of interneurons and retinal ganglion cells (RGCs) and promotes synaptic connectivity via homophilic interactions. The sequence is that of Cell adhesion molecule DSCAML1 (Dscaml1) from Mus musculus (Mouse).